Here is a 267-residue protein sequence, read N- to C-terminus: Hydroxyethylthiazole kinase (267 aa).

M46 lines the substrate pocket. R122 and S168 together coordinate ATP. G195 is a substrate binding site.

The protein belongs to the Thz kinase family. The cofactor is Mg(2+).

It carries out the reaction 5-(2-hydroxyethyl)-4-methylthiazole + ATP = 4-methyl-5-(2-phosphooxyethyl)-thiazole + ADP + H(+). It functions in the pathway cofactor biosynthesis; thiamine diphosphate biosynthesis; 4-methyl-5-(2-phosphoethyl)-thiazole from 5-(2-hydroxyethyl)-4-methylthiazole: step 1/1. In terms of biological role, catalyzes the phosphorylation of the hydroxyl group of 4-methyl-5-beta-hydroxyethylthiazole (THZ). The sequence is that of Hydroxyethylthiazole kinase from Nitratidesulfovibrio vulgaris (strain DSM 19637 / Miyazaki F) (Desulfovibrio vulgaris).